Reading from the N-terminus, the 400-residue chain is Exodeoxyribonuclease 7 large subunit (400 aa).

It belongs to the XseA family. Heterooligomer composed of large and small subunits.

The protein resides in the cytoplasm. It carries out the reaction Exonucleolytic cleavage in either 5'- to 3'- or 3'- to 5'-direction to yield nucleoside 5'-phosphates.. Its function is as follows. Bidirectionally degrades single-stranded DNA into large acid-insoluble oligonucleotides, which are then degraded further into small acid-soluble oligonucleotides. This is Exodeoxyribonuclease 7 large subunit from Clostridium novyi (strain NT).